The primary structure comprises 328 residues: Malate dehydrogenase (328 aa).

13–19 (GGTGQIA) contacts NAD(+). 2 residues coordinate substrate: R94 and R100. Residues N107, Q114, and 131–133 (VGN) contribute to the NAD(+) site. Substrate-binding residues include N133 and R164. The active-site Proton acceptor is H189.

It belongs to the LDH/MDH superfamily. MDH type 2 family.

It carries out the reaction (S)-malate + NAD(+) = oxaloacetate + NADH + H(+). In terms of biological role, catalyzes the reversible oxidation of malate to oxaloacetate. This chain is Malate dehydrogenase, found in Chlamydia felis (strain Fe/C-56) (Chlamydophila felis).